We begin with the raw amino-acid sequence, 472 residues long: Radical SAM cyclopropyl synthase TigE (472 aa).

The Radical SAM core domain maps to 106–331 (GEQIKAIQLV…VIDLYEYGLD (226 aa)). Cys120, Cys124, Cys127, Tyr339, Cys360, Cys378, Cys414, Cys417, Cys423, Cys427, and Cys446 together coordinate [4Fe-4S] cluster.

Belongs to the radical SAM superfamily. Requires [4Fe-4S] cluster as cofactor.

It catalyses the reaction L-isoleucyl-[protein] + AH2 + 2 S-adenosyl-L-methionine = methylcyclopropylglycine-[protein] + 2 5'-deoxyadenosine + 2 L-methionine + A + 2 H(+). Functionally, radical S-adenosylmethionine (SAM) enzyme that catalyzes the formation of methylcyclopropylglycine (mCPG) residues from isoleucine residues residing in the repeating TIGSVS motif of the precursor peptide TigB. Is thus involved in the maturation of a ribosomally synthesized and post-translationally modified peptide (RiPP). This chain is Radical SAM cyclopropyl synthase TigE, found in Paramaledivibacter caminithermalis (strain DSM 15212 / CIP 107654 / DViRD3) (Clostridium caminithermale).